The primary structure comprises 189 residues: HGPRTase-like protein (189 aa).

It belongs to the purine/pyrimidine phosphoribosyltransferase family. Archaeal HPRT subfamily.

May catalyze a purine salvage reaction, the substrate is unknown. This Halomicrobium mukohataei (strain ATCC 700874 / DSM 12286 / JCM 9738 / NCIMB 13541) (Haloarcula mukohataei) protein is HGPRTase-like protein.